Reading from the N-terminus, the 327-residue chain is DNA-directed RNA polymerase subunit alpha (327 aa).

The alpha N-terminal domain (alpha-NTD) stretch occupies residues Met-1–Glu-233. The segment at Thr-264 to Lys-327 is alpha C-terminal domain (alpha-CTD).

Belongs to the RNA polymerase alpha chain family. In terms of assembly, in plastids the minimal PEP RNA polymerase catalytic core is composed of four subunits: alpha, beta, beta', and beta''. When a (nuclear-encoded) sigma factor is associated with the core the holoenzyme is formed, which can initiate transcription.

The protein resides in the plastid. It localises to the chloroplast. It carries out the reaction RNA(n) + a ribonucleoside 5'-triphosphate = RNA(n+1) + diphosphate. Functionally, DNA-dependent RNA polymerase catalyzes the transcription of DNA into RNA using the four ribonucleoside triphosphates as substrates. The chain is DNA-directed RNA polymerase subunit alpha from Capsella bursa-pastoris (Shepherd's purse).